Here is a 180-residue protein sequence, read N- to C-terminus: Shikimate kinase (180 aa).

ATP is bound at residue 14–19 (GAGKSC). Serine 18 contributes to the Mg(2+) binding site. Residues aspartate 36, arginine 60, and glycine 82 each contribute to the substrate site. Arginine 120 is an ATP binding site. Arginine 139 lines the substrate pocket.

The protein belongs to the shikimate kinase family. In terms of assembly, monomer. Mg(2+) serves as cofactor.

The protein localises to the cytoplasm. The catalysed reaction is shikimate + ATP = 3-phosphoshikimate + ADP + H(+). It participates in metabolic intermediate biosynthesis; chorismate biosynthesis; chorismate from D-erythrose 4-phosphate and phosphoenolpyruvate: step 5/7. Catalyzes the specific phosphorylation of the 3-hydroxyl group of shikimic acid using ATP as a cosubstrate. This chain is Shikimate kinase, found in Xanthomonas axonopodis pv. citri (strain 306).